The sequence spans 171 residues: Protein X (171 aa).

3 helical membrane-spanning segments follow: residues Ser11 to Leu31, Leu38 to Met58, and Ala73 to Ile93.

It localises to the virion membrane. This chain is Protein X (VPX), found in Mus musculus domesticus (western European house mouse).